Consider the following 136-residue polypeptide: Large ribosomal subunit protein eL27 (136 aa).

Residues 5–40 (MKPGKVVMVLAGRYAGRKAVIVKNIDDGTADRPYSH) form the KOW domain.

The protein belongs to the eukaryotic ribosomal protein eL27 family. In terms of assembly, component of the large ribosomal subunit.

It localises to the cytoplasm. The protein localises to the cytosol. Its subcellular location is the rough endoplasmic reticulum. Its function is as follows. Component of the large ribosomal subunit. In Hippocampus comes (Tiger tail seahorse), this protein is Large ribosomal subunit protein eL27 (rpl27).